A 1121-amino-acid polypeptide reads, in one-letter code: Solute carrier family 38 member 10 (1121 aa).

Helical transmembrane passes span 4–24 (AAAS…GVSV), 36–58 (IVLG…MFLV), 84–104 (LVET…YVVI), 120–140 (VGGT…VLPL), 153–173 (FSAM…LSSL), 229–249 (IFAS…FFGY), 272–292 (MLRV…ILPC), 323–343 (ALTL…PNVE), 345–365 (ILGL…PALI), and 378–398 (VVLW…LSVS). Disordered regions lie at residues 434 to 691 (VVAV…EEAG), 731 to 904 (KEIH…AATG), and 965 to 1068 (ISDG…ELAP). Composition is skewed to basic and acidic residues over residues 439-454 (EDGR…REEL), 466-475 (PGREDGKEAQ), 493-508 (EAHR…KVVV), and 544-559 (DSER…EVGK). S612 bears the Phosphoserine mark. 6 stretches are compositionally biased toward basic and acidic residues: residues 645 to 659 (DSDH…EEKP), 668 to 679 (EPREQRDVERAG), 731 to 752 (KEIH…EVHP), 763 to 773 (EAPEGKARETM), 802 to 811 (SLEHPERPVG), and 863 to 876 (PARE…RLAE). A Phosphothreonine modification is found at T772. At S802 the chain carries Phosphoserine. Phosphoserine is present on residues S890 and S966. The segment covering 976 to 998 (HRLDHGGYLEMRKEARGGDHMPV) has biased composition (basic and acidic residues). Residue S999 is modified to Phosphoserine. 2 stretches are compositionally biased toward basic and acidic residues: residues 1035–1044 (DNAKPNRDLK) and 1057–1068 (DLGPHAEGELAP).

This sequence belongs to the amino acid/polyamine transporter 2 family.

The protein localises to the membrane. It carries out the reaction L-glutamate(out) = L-glutamate(in). The enzyme catalyses L-glutamine(out) = L-glutamine(in). The catalysed reaction is L-alanine(in) = L-alanine(out). It catalyses the reaction L-serine(in) = L-serine(out). It carries out the reaction L-leucine(in) = L-leucine(out). Its function is as follows. Facilitates bidirectional transport of amino acids. May act as a glutamate sensor that regulates glutamate-glutamine cycle and mTOR signaling in the brain. The transport mechanism remains to be elucidated. This chain is Solute carrier family 38 member 10, found in Pongo abelii (Sumatran orangutan).